The sequence spans 2212 residues: RNA-directed RNA polymerase L (2212 aa).

Residues 30–288 (KDALLSQVHP…SHEENDSLDC (259 aa)) are endonuclease. Mn(2+) contacts are provided by glutamate 55, aspartate 93, and glutamate 106. Lysine 119 is an active-site residue. Residues 922–942 (MKSSDAREERLQDPKRNEKNA) are disordered. Basic and acidic residues predominate over residues 923-942 (KSSDAREERLQDPKRNEKNA). The RdRp catalytic domain occupies 1175 to 1371 (CDMKMAVNNG…YLSSKLNKFV (197 aa)). Aspartate 1333 contributes to the Mg(2+) binding site.

It belongs to the Bunyavirales RNA polymerase family. As to quaternary structure, homomultimer; the oligomeric structure is essential for the polymerase activity. Interacts with nucleoprotein N. Interacts with protein Z; this interaction inhibits viral transcription and replication, Z partially blocks the product exit tunnel for the releasing nascent RNA product. Mn(2+) serves as cofactor. It depends on Mg(2+) as a cofactor.

The protein resides in the virion. It is found in the host cytoplasm. The enzyme catalyses RNA(n) + a ribonucleoside 5'-triphosphate = RNA(n+1) + diphosphate. Functionally, RNA-dependent RNA polymerase, which is responsible for the replication and transcription of the viral RNA genome using antigenomic RNA as an intermediate. During transcription, synthesizes subgenomic RNAs and assures their capping by a cap-snatching mechanism, which involves the endonuclease activity cleaving the host capped pre-mRNAs. These short capped RNAs are then used as primers for viral transcription. The 3'-end of subgenomic mRNAs molecules are heterogeneous and not polyadenylated. The replicase function is to direct synthesis of antigenomic and genomic RNA which are encapsidated and non capped. As a consequence of the use of the same enzyme for both transcription and replication, these mechanisms need to be well coordinated. These processes may be regulated by proteins N and Z in a dose-dependent manner. Z protein inhibits the viral polymerase L und thus the viral transcription and RNA synthesis. In Sabia mammarenavirus (isolate Human/Brasil/SPH114202/1990) (SABV), this protein is RNA-directed RNA polymerase L.